A 161-amino-acid polypeptide reads, in one-letter code: Glycine/sarcosine/betaine reductase complex component A2 (161 aa).

The active site involves Sec42. A non-standard amino acid (selenocysteine) is located at residue Sec42.

The protein belongs to the GrdA family. As to quaternary structure, monomer. Component of the glycine, sarcosine and betaine reductase complexes, together with components B and C.

The catalysed reaction is acetyl phosphate + [thioredoxin]-disulfide + NH4(+) + H2O = [thioredoxin]-dithiol + glycine + phosphate + H(+). It catalyses the reaction acetyl phosphate + methylamine + [thioredoxin]-disulfide + H2O = sarcosine + [thioredoxin]-dithiol + phosphate + H(+). It carries out the reaction acetyl phosphate + trimethylamine + [thioredoxin]-disulfide + H2O = glycine betaine + [thioredoxin]-dithiol + phosphate + H(+). Functionally, in the first step of glycine, betaine and sarcosine reductases, the substrate is bound to component PB via a Schiff base intermediate. Then the PB-activated substrate is nucleophilically attacked by the selenol anion of component PA to transform it to a carboxymethylated selenoether and the respective amine. By action of component PC, acetyl phosphate is formed, leaving component PA in its oxidized state. Finally component PA becomes reduced by the thioredoxin system to start a new catalytic cycle of reductive deamination. The polypeptide is Glycine/sarcosine/betaine reductase complex component A2 (grdA2) (Photobacterium profundum (strain SS9)).